A 304-amino-acid chain; its full sequence is Acetyl-coenzyme A carboxylase carboxyl transferase subunit beta (304 aa).

The 270-residue stretch at 23 to 292 (VWTKCDSCGQ…PNPEAPREGV (270 aa)) folds into the CoA carboxyltransferase N-terminal domain. 4 residues coordinate Zn(2+): cysteine 27, cysteine 30, cysteine 46, and cysteine 49. Residues 27 to 49 (CDSCGQVLYRAELERNLEVCPKC) form a C4-type zinc finger. The segment at 284–304 (NPEAPREGVVVPPVPDQEPEA) is disordered. Residues 295–304 (PPVPDQEPEA) are compositionally biased toward pro residues.

It belongs to the AccD/PCCB family. As to quaternary structure, acetyl-CoA carboxylase is a heterohexamer composed of biotin carboxyl carrier protein (AccB), biotin carboxylase (AccC) and two subunits each of ACCase subunit alpha (AccA) and ACCase subunit beta (AccD). It depends on Zn(2+) as a cofactor.

The protein localises to the cytoplasm. The catalysed reaction is N(6)-carboxybiotinyl-L-lysyl-[protein] + acetyl-CoA = N(6)-biotinyl-L-lysyl-[protein] + malonyl-CoA. It functions in the pathway lipid metabolism; malonyl-CoA biosynthesis; malonyl-CoA from acetyl-CoA: step 1/1. Functionally, component of the acetyl coenzyme A carboxylase (ACC) complex. Biotin carboxylase (BC) catalyzes the carboxylation of biotin on its carrier protein (BCCP) and then the CO(2) group is transferred by the transcarboxylase to acetyl-CoA to form malonyl-CoA. This chain is Acetyl-coenzyme A carboxylase carboxyl transferase subunit beta, found in Shigella flexneri.